The sequence spans 143 residues: Nucleoside diphosphate kinase (143 aa).

The 132-residue stretch at 1–132 (MVKPDGVQRG…LWFSPQELCQ (132 aa)) folds into the NDPK-like domain. Residues lysine 3, phenylalanine 51, arginine 79, threonine 85, arginine 96, valine 103, and asparagine 106 each coordinate ADP. The ATP site is built by lysine 3, phenylalanine 51, arginine 79, threonine 85, and arginine 96. Asparagine 106 is an ATP binding site. The active-site Pros-phosphohistidine intermediate is histidine 109.

This sequence belongs to the NDK family. In terms of assembly, homohexamer. The cofactor is Mg(2+).

The catalysed reaction is a 2'-deoxyribonucleoside 5'-diphosphate + ATP = a 2'-deoxyribonucleoside 5'-triphosphate + ADP. The enzyme catalyses a ribonucleoside 5'-diphosphate + ATP = a ribonucleoside 5'-triphosphate + ADP. It catalyses the reaction GDP + ATP = GTP + ADP. The protein operates within purine metabolism; purine nucleotide biosynthesis. Major role in the synthesis of nucleoside triphosphates other than ATP. The ATP gamma phosphate is transferred to the NDP beta phosphate via a ping-pong mechanism, using a phosphorylated active-site intermediate. This is Nucleoside diphosphate kinase from Schistosoma mansoni (Blood fluke).